The chain runs to 216 residues: Uracil phosphoribosyltransferase (216 aa).

5-phospho-alpha-D-ribose 1-diphosphate-binding positions include arginine 81, arginine 106, and 135-143 (DPMLATGSS). Residues isoleucine 200 and 205–207 (GDA) contribute to the uracil site. A 5-phospho-alpha-D-ribose 1-diphosphate-binding site is contributed by aspartate 206.

This sequence belongs to the UPRTase family. Mg(2+) is required as a cofactor.

The enzyme catalyses UMP + diphosphate = 5-phospho-alpha-D-ribose 1-diphosphate + uracil. It functions in the pathway pyrimidine metabolism; UMP biosynthesis via salvage pathway; UMP from uracil: step 1/1. With respect to regulation, allosterically activated by GTP. Catalyzes the conversion of uracil and 5-phospho-alpha-D-ribose 1-diphosphate (PRPP) to UMP and diphosphate. The protein is Uracil phosphoribosyltransferase (upp) of Porphyromonas gingivalis (strain ATCC 33277 / DSM 20709 / CIP 103683 / JCM 12257 / NCTC 11834 / 2561).